Reading from the N-terminus, the 907-residue chain is MAAPLVPLSQQIPGGNPLYESYYKQVDPAYTGRVGASEAALFLKKSGLSDIILGKIWDLADPEGKGFLDKQGFYVALRLVACAQSGHEVTLSSLSLTMPPPKFHDTSSPLMATQSSAETHWAVRVEEKAKFDGIFESLLPVNGLLSGDKVKPVLMNSKLPLDVLGRVWDLSDIDKDGHLDRDEFAVAMHLVYRALEKEPVPSILPPPLIPPSKRKKTVFAGAVPVLPASPPPKDSLRSTPSHGSVSSLNSTGSLSPKHSVKQPPVAWVVPVADKMRFDEIFLKTDLDLDGYVSGQEVKEIFMHSGLTQNLLAHIWALADTRQTGKLSKEQFALAMYFIQQKVSKGIDPPQVLSPDMVPPSERGTPIPDSSSTLASGEFTGVKELDDISQEIAQLQREKYSLEQDIREKEEAIRQKTSEVQELQNDLDRETSSLQELEAQKQDAQDRLDEMDQQKAKLRDMLSDVRQKCQDETQTISSLKTQIQSQESDLKSQEDDLNRAKSELNRLQQEETQLEQSIQAGRAQLETILRSLKCTQDDINQARSKLSQLQESHLEAHRSLEQYDQVPDGVSGTSLPDLATLNEGILLAERGGFGAMDDPFKNKALLFSNNSQELHPDPFQAEDPFKSDPFKGADPFKGDPFQSDPFSEQQTAATDPFGGDPFKESDPFHSSSSDDFFKKQTKNDPFTSDPFTKNPSLPSKLDPFESSDPFSSSSISSKGSDPFGTLDPFGSSSFSSAEGFADFSQMSKPPPSGPFSSSLGGTGFSDDPFKSKQDTPALPPKKPAPPRPKPPSGQSTPVSQLGSSDFPESPDPFQPLGADSGDPFQNKKGFGDPFSGKDPFAPSSSAKPPKTSSSGFADFTSFGNEEQQLAWAKRESEKAEQERLARLRRQEQEDLELAIALSKADMPA.

At Ala-2 the chain carries N-acetylalanine. The EH 1 domain maps to 15 to 104 (GNPLYESYYK…SLTMPPPKFH (90 aa)). The interaction with DAB2 stretch occupies residues 15-368 (GNPLYESYYK…PSERGTPIPD (354 aa)). The region spanning 48 to 83 (LSDIILGKIWDLADPEGKGFLDKQGFYVALRLVACA) is the EF-hand 1 domain. Tyr-74 bears the Phosphotyrosine mark. Phosphoserine occurs at positions 107 and 108. Residues 127 to 215 (EKAKFDGIFE…PPLIPPSKRK (89 aa)) form the EH 2 domain. The region spanning 159-194 (LPLDVLGRVWDLSDIDKDGHLDRDEFAVAMHLVYRA) is the EF-hand 2 domain. Positions 172, 174, 176, 178, and 183 each coordinate Ca(2+). Ser-229, Ser-244, Ser-253, Ser-255, and Ser-259 each carry phosphoserine. The disordered stretch occupies residues 229–260 (SPPPKDSLRSTPSHGSVSSLNSTGSLSPKHSV). Low complexity predominate over residues 241–255 (SHGSVSSLNSTGSLS). EF-hand domains follow at residues 272–307 (ADKMRFDEIFLKTDLDLDGYVSGQEVKEIFMHSGLT) and 308–341 (QNLLAHIWALADTRQTGKLSKEQFALAMYFIQQK). In terms of domain architecture, EH 3 spans 273 to 363 (DKMRFDEIFL…PDMVPPSERG (91 aa)). Position 360 is a phosphoserine (Ser-360). Thr-364 carries the phosphothreonine modification. Phosphoserine is present on residues Ser-369 and Ser-375. Residues 384 to 551 (LDDISQEIAQ…RSKLSQLQES (168 aa)) are a coiled coil. Residue Ser-558 is modified to Phosphoserine. Tyr-562 is modified (phosphotyrosine). Residue Ser-610 is modified to Phosphoserine. Residues 611 to 860 (QELHPDPFQA…SSSGFADFTS (250 aa)) form a disordered region. The span at 622 to 636 (DPFKSDPFKGADPFK) shows a compositional bias: basic and acidic residues. The span at 643-652 (DPFSEQQTAA) shows a compositional bias: polar residues. 5 positions are modified to phosphoserine: Ser-664, Ser-670, Ser-695, Ser-715, and Ser-732. Polar residues predominate over residues 682 to 696 (NDPFTSDPFTKNPSL). Residues 703–743 (FESSDPFSSSSISSKGSDPFGTLDPFGSSSFSSAEGFADFS) are compositionally biased toward low complexity. Residues 776 to 790 (ALPPKKPAPPRPKPP) show a composition bias toward pro residues. The residue at position 791 (Ser-791) is a Phosphoserine. Residues 791 to 802 (SGQSTPVSQLGS) show a composition bias toward polar residues. At Thr-795 the chain carries Phosphothreonine. A compositionally biased stretch (low complexity) spans 840 to 853 (APSSSAKPPKTSSS). UIM domains follow at residues 863–882 (NEEQQLAWAKRESEKAEQER) and 889–907 (QEQEDLELAIALSKADMPA).

As to quaternary structure, interacts with EPS15, AGFG1/HRB and AGFG2/HRBL. Associates with the clathrin-associated adapter protein complex 2 (AP-2). Interacts with FCHO1. Interacts with FCHO2. Interacts (via EH domains) with DAB2. Interacts with UBQLN1 (via ubiquitin-like domain). Interacts with CAVIN3 (via leucine-zipper domain). Interacts with REPS2. In terms of processing, phosphorylated on tyrosine residues by EGFR.

It localises to the cell membrane. It is found in the nucleus. Its subcellular location is the membrane. The protein resides in the coated pit. In terms of biological role, seems to be a constitutive component of clathrin-coated pits that is required for receptor-mediated endocytosis. Involved in endocytosis of integrin beta-1 (ITGB1) and transferrin receptor (TFR); internalization of ITGB1 as DAB2-dependent cargo but not TFR seems to require association with DAB2. In Mus musculus (Mouse), this protein is Epidermal growth factor receptor substrate 15-like 1 (Eps15l1).